The chain runs to 867 residues: uncharacterized protein (867 aa).

Positions 76–108 form a DNA-binding region, zn(2)-C6 fungal-type; that stretch reads CDFCRQKKIRCDMDQSPRPGNACINCRKHHLDC. Disordered regions lie at residues 110 to 167 and 217 to 257; these read FTRT…ITPV and PQLA…NSNL. 2 stretches are compositionally biased toward polar residues: residues 137–167 and 248–257; these read SAKS…ITPV and SISSYTNSNL.

The protein localises to the nucleus. This is an uncharacterized protein from Schizosaccharomyces pombe (strain 972 / ATCC 24843) (Fission yeast).